The chain runs to 81 residues: uncharacterized protein (81 aa).

This is an uncharacterized protein from Bacillus anthracis.